The chain runs to 334 residues: Glyceraldehyde-3-phosphate dehydrogenase (334 aa).

NAD(+)-binding positions include 12–13 (TI) and glycine 111. 140 to 142 (SCN) provides a ligand contact to D-glyceraldehyde 3-phosphate. Catalysis depends on cysteine 141, which acts as the Nucleophile. Position 167 (arginine 167) interacts with NAD(+). 192 to 193 (HG) is a D-glyceraldehyde 3-phosphate binding site. Glutamine 298 serves as a coordination point for NAD(+).

The protein belongs to the glyceraldehyde-3-phosphate dehydrogenase family. Homotetramer.

Its subcellular location is the cytoplasm. The catalysed reaction is D-glyceraldehyde 3-phosphate + phosphate + NADP(+) = (2R)-3-phospho-glyceroyl phosphate + NADPH + H(+). It catalyses the reaction D-glyceraldehyde 3-phosphate + phosphate + NAD(+) = (2R)-3-phospho-glyceroyl phosphate + NADH + H(+). It functions in the pathway carbohydrate degradation; glycolysis; pyruvate from D-glyceraldehyde 3-phosphate: step 1/5. The protein is Glyceraldehyde-3-phosphate dehydrogenase of Thermococcus kodakarensis (strain ATCC BAA-918 / JCM 12380 / KOD1) (Pyrococcus kodakaraensis (strain KOD1)).